Consider the following 4116-residue polypeptide: Dynein axonemal heavy chain 3 (4116 aa).

2 disordered regions span residues 1–68 (MGAT…ANEE) and 137–172 (VPRDRTGQGLPSSGNRSSSEPMRKKTKFSSRNKEDS). Residues 1 to 1390 (MGATGRLELT…QVQIITTEAL (1390 aa)) are stem. Residues 145–156 (GLPSSGNRSSSE) show a composition bias toward polar residues. The stretch at 785–852 (DLIKRCSEFE…NKEEELLEKE (68 aa)) forms a coiled coil. AAA regions lie at residues 1391-1612 (YGYE…VLTA), 1672-1903 (KVLN…LHCK), 2036-2284 (KVPA…VIQG), and 2395-2646 (EFNN…LRRH). ATP is bound by residues 1429–1436 (GPAGTGKT), 1710–1717 (GDPMGGKT), 2074–2081 (GPTGTGKS), and 2434–2441 (GIGGSGRQ). A stalk region spans residues 2661–2960 (FKTLLNSKRQ…KDLEENIEIC (300 aa)). AAA stretches follow at residues 3045–3275 (LGDP…EISE) and 3488–3712 (VREF…QIQM).

The protein belongs to the dynein heavy chain family. In terms of assembly, consists of at least two heavy chains and a number of intermediate and light chains. Expressed primarily in trachea and testis, 2 tissues containing axonemal structures. Also expressed in lung.

The protein localises to the cytoplasm. The protein resides in the cytoskeleton. Its subcellular location is the cilium axoneme. Its function is as follows. Force generating protein of respiratory cilia. Produces force towards the minus ends of microtubules. Dynein has ATPase activity; the force-producing power stroke is thought to occur on release of ADP. Involved in sperm motility; implicated in sperm flagellar assembly. This Homo sapiens (Human) protein is Dynein axonemal heavy chain 3 (DNAH3).